We begin with the raw amino-acid sequence, 342 residues long: Thioredoxin reductase 2, mitochondrial (342 aa).

The transit peptide at 1–23 (MIKHIVSPFRTNFVGISKSVLSR) directs the protein to the mitochondrion. FAD contacts are provided by residues 34–37 (SGPA), 56–68 (EGMM…AGGQ), 63–64 (IA), glutamine 68, asparagine 77, valine 110, cysteine 168, aspartate 311, 311–320 (DVQDSRYRQA), and 318–320 (RQA). The cysteines at positions 165 and 168 are disulfide-linked.

The protein belongs to the class-II pyridine nucleotide-disulfide oxidoreductase family. In terms of assembly, homodimer. It depends on FAD as a cofactor.

Its subcellular location is the mitochondrion. It catalyses the reaction [thioredoxin]-dithiol + NADP(+) = [thioredoxin]-disulfide + NADPH + H(+). Acts on mitochondrial thioredoxin 3. Implicated in the defense against oxidative stress. The polypeptide is Thioredoxin reductase 2, mitochondrial (Saccharomyces cerevisiae (strain ATCC 204508 / S288c) (Baker's yeast)).